The following is a 239-amino-acid chain: Uridylate kinase (239 aa).

Lysine 10–glycine 13 contributes to the ATP binding site. Positions glycine 18–glycine 23 are involved in allosteric activation by GTP. Glycine 52 contributes to the UMP binding site. The ATP site is built by glycine 53 and arginine 57. Residues aspartate 73 and threonine 134–threonine 141 contribute to the UMP site. Threonine 161, tyrosine 167, and aspartate 170 together coordinate ATP.

Belongs to the UMP kinase family. In terms of assembly, homohexamer.

It is found in the cytoplasm. The enzyme catalyses UMP + ATP = UDP + ADP. Its pathway is pyrimidine metabolism; CTP biosynthesis via de novo pathway; UDP from UMP (UMPK route): step 1/1. With respect to regulation, allosterically activated by GTP. Inhibited by UTP. Its function is as follows. Catalyzes the reversible phosphorylation of UMP to UDP. The sequence is that of Uridylate kinase from Campylobacter jejuni subsp. jejuni serotype O:2 (strain ATCC 700819 / NCTC 11168).